The following is a 74-amino-acid chain: Large ribosomal subunit protein bL31 (74 aa).

The protein belongs to the bacterial ribosomal protein bL31 family. Type A subfamily. In terms of assembly, part of the 50S ribosomal subunit.

Functionally, binds the 23S rRNA. The sequence is that of Large ribosomal subunit protein bL31 from Xanthobacter autotrophicus (strain ATCC BAA-1158 / Py2).